A 164-amino-acid chain; its full sequence is UPF0561 protein C2orf68 homolog (164 aa).

Composition is skewed to basic and acidic residues over residues 1 to 13 (MEVIRDGEGESVK) and 35 to 49 (IARDDYDREVKQAKE). Residues 1–98 (MEVIRDGEGE…WNESSSGTEM (98 aa)) form a disordered region. Positions 50–64 (KQRRRHTNTPRRPRR) are enriched in basic residues.

The protein belongs to the UPF0561 family.

This is UPF0561 protein C2orf68 homolog from Danio rerio (Zebrafish).